A 346-amino-acid chain; its full sequence is STE20-related kinase adapter protein stlk (346 aa).

The region spanning 10–298 (YKLLEILKNG…ASKLMTHSFL (289 aa)) is the Protein kinase domain. ATP-binding positions include 16 to 24 (LKNGMIGTV) and Lys-38.

It belongs to the protein kinase superfamily. STE Ser/Thr protein kinase family. STE20 subfamily.

This chain is STE20-related kinase adapter protein stlk, found in Drosophila melanogaster (Fruit fly).